A 406-amino-acid polypeptide reads, in one-letter code: CRISP/Allergen/PR-1 (406 aa).

The first 18 residues, 1–18 (MHFQVILMMMWLWLEAEG), serve as a signal peptide directing secretion. Asn-39 is a glycosylation site (N-linked (GlcNAc...) asparagine). The 148-residue stretch at 58-205 (LREHNKLRSR…TFKDLYTCNY (148 aa)) folds into the SCP domain.

The protein belongs to the CRISP family. Post-translationally, contains 9 disulfide bonds. Expressed by the venom gland.

It is found in the secreted. The chain is CRISP/Allergen/PR-1 from Trittame loki (Brush-footed trapdoor spider).